Reading from the N-terminus, the 198-residue chain is Transmembrane protein 17 (198 aa).

Asn13 and Asn23 each carry an N-linked (GlcNAc...) asparagine glycan. 4 consecutive transmembrane segments (helical) span residues 45–65 (MSLYFNTYYFPLWWVSSIMML), 78–98 (FIVITVIILITLIEAIRLYLG), 110–130 (LAGFWLLSLLLQLPLILFLLF), and 142–162 (AIHIIFTLFLAFQVVAAFLTL).

The protein belongs to the TMEM17 family. In terms of assembly, part of the tectonic-like complex (also named B9 complex).

It localises to the cell projection. Its subcellular location is the cilium membrane. Functionally, transmembrane component of the tectonic-like complex, a complex localized at the transition zone of primary cilia and acting as a barrier that prevents diffusion of transmembrane proteins between the cilia and plasma membranes. Required for ciliogenesis and sonic hedgehog/SHH signaling. The chain is Transmembrane protein 17 (TMEM17) from Homo sapiens (Human).